The chain runs to 1029 residues: Kinesin-like protein KIF17 (1029 aa).

The Kinesin motor domain occupies Ala-5–Ile-335. Gly-91–Ser-98 contacts ATP. Residues Lys-346 to Ala-462 adopt a coiled-coil conformation. Disordered stretches follow at residues Glu-523 to Glu-569 and Val-647 to Pro-673. The segment covering Ser-532–Glu-551 has biased composition (low complexity). Residues Ser-657–Pro-673 are compositionally biased toward basic and acidic residues. A coiled-coil region spans residues Gln-739–Thr-846. 2 disordered regions span residues Ala-908–Met-931 and Lys-968–Leu-1029.

It belongs to the TRAFAC class myosin-kinesin ATPase superfamily. Kinesin family. In terms of assembly, homodimer. Interacts with APBA1 (via PDZ domain); the interaction is direct and is required for association of KIF17 with the cargo that is to be transported. Interacts with IFT B complex components IFT52 and IFT57. Interacts with IFT70B. Interacts with PIWIL1. Interacts with TBATA.

The protein resides in the cytoplasm. Its subcellular location is the cytoskeleton. The protein localises to the cell projection. It localises to the cilium. It is found in the dendrite. Its function is as follows. Dendrite-specific motor protein which, in association with the Apba1-containing complex (LIN-10-LIN-2-LIN-7 complex), transports vesicles containing N-methyl-D-aspartate (NMDA) receptor subunit NR2B along microtubules. The polypeptide is Kinesin-like protein KIF17 (KIF17) (Homo sapiens (Human)).